The sequence spans 529 residues: Peptide chain release factor 3 (529 aa).

The region spanning 11–280 (NKRRTFAIIS…GLTKWAPTPL (270 aa)) is the tr-type G domain. GTP is bound by residues 20 to 27 (SHPDAGKT), 88 to 92 (DTPGH), and 142 to 145 (NKCD).

It belongs to the TRAFAC class translation factor GTPase superfamily. Classic translation factor GTPase family. PrfC subfamily.

It is found in the cytoplasm. Increases the formation of ribosomal termination complexes and stimulates activities of RF-1 and RF-2. It binds guanine nucleotides and has strong preference for UGA stop codons. It may interact directly with the ribosome. The stimulation of RF-1 and RF-2 is significantly reduced by GTP and GDP, but not by GMP. In Pseudoalteromonas translucida (strain TAC 125), this protein is Peptide chain release factor 3.